An 81-amino-acid chain; its full sequence is Small ribosomal subunit protein uS17 (81 aa).

It belongs to the universal ribosomal protein uS17 family. Part of the 30S ribosomal subunit.

Its function is as follows. One of the primary rRNA binding proteins, it binds specifically to the 5'-end of 16S ribosomal RNA. The sequence is that of Small ribosomal subunit protein uS17 from Protochlamydia amoebophila (strain UWE25).